The chain runs to 623 residues: Trehalase (623 aa).

It belongs to the glycosyl hydrolase 15 family. Monomer.

The catalysed reaction is alpha,alpha-trehalose + H2O = alpha-D-glucose + beta-D-glucose. It functions in the pathway glycan degradation; trehalose degradation; D-glucose from alpha,alpha-trehalose: step 1/1. Inhibited by validamycin A. Functionally, catalyzes the hydrolysis of alpha,alpha-trehalose into two molecules of D-glucose. The polypeptide is Trehalase (Thermoplasma volcanium (strain ATCC 51530 / DSM 4299 / JCM 9571 / NBRC 15438 / GSS1)).